Consider the following 219-residue polypeptide: RNA chaperone ProQ (219 aa).

Residues 102 to 160 form a disordered region; the sequence is TLKESQDKAKAKRAERSKDEGDAADKAPRKPKRKPQPQARRDAKPAAKDKPKAAPKAPA. Basic and acidic residues-rich tracts occupy residues 105-129 and 140-153; these read ESQDKAKAKRAERSKDEGDAADKAP and ARRDAKPAAKDKPK.

Belongs to the ProQ family.

The protein resides in the cytoplasm. RNA chaperone with significant RNA binding, RNA strand exchange and RNA duplexing activities. The chain is RNA chaperone ProQ from Shewanella amazonensis (strain ATCC BAA-1098 / SB2B).